Here is a 75-residue protein sequence, read N- to C-terminus: Sec-independent protein translocase protein TatA (75 aa).

The chain crosses the membrane as a helical span at residues 1–21 (MGGISIWQLLIIVAIIVLLFG). Positions 50–75 (DAEFKSLNKDESATAGSEKVKDKEQA) are disordered.

It belongs to the TatA/E family. As to quaternary structure, the Tat system comprises two distinct complexes: a TatABC complex, containing multiple copies of TatA, TatB and TatC subunits, and a separate TatA complex, containing only TatA subunits. Substrates initially bind to the TatABC complex, which probably triggers association of the separate TatA complex to form the active translocon.

The protein localises to the cell inner membrane. Functionally, part of the twin-arginine translocation (Tat) system that transports large folded proteins containing a characteristic twin-arginine motif in their signal peptide across membranes. TatA could form the protein-conducting channel of the Tat system. The polypeptide is Sec-independent protein translocase protein TatA (Mannheimia succiniciproducens (strain KCTC 0769BP / MBEL55E)).